The sequence spans 258 residues: Small ribosomal subunit protein uS2 (258 aa).

It belongs to the universal ribosomal protein uS2 family.

The chain is Small ribosomal subunit protein uS2 from Streptococcus suis (strain 05ZYH33).